The following is a 336-amino-acid chain: Pyridoxal 5'-phosphate synthase subunit PdxS (336 aa).

A D-ribose 5-phosphate-binding site is contributed by Asp30. Lys87 acts as the Schiff-base intermediate with D-ribose 5-phosphate in catalysis. Gly159 provides a ligand contact to D-ribose 5-phosphate. A D-glyceraldehyde 3-phosphate-binding site is contributed by Arg171. Residues Gly257 and 278-279 (GS) each bind D-ribose 5-phosphate.

This sequence belongs to the PdxS/SNZ family. In the presence of PdxT, forms a dodecamer of heterodimers.

It catalyses the reaction aldehydo-D-ribose 5-phosphate + D-glyceraldehyde 3-phosphate + L-glutamine = pyridoxal 5'-phosphate + L-glutamate + phosphate + 3 H2O + H(+). It functions in the pathway cofactor biosynthesis; pyridoxal 5'-phosphate biosynthesis. Its function is as follows. Catalyzes the formation of pyridoxal 5'-phosphate from ribose 5-phosphate (RBP), glyceraldehyde 3-phosphate (G3P) and ammonia. The ammonia is provided by the PdxT subunit. Can also use ribulose 5-phosphate and dihydroxyacetone phosphate as substrates, resulting from enzyme-catalyzed isomerization of RBP and G3P, respectively. The polypeptide is Pyridoxal 5'-phosphate synthase subunit PdxS (Thermoplasma acidophilum (strain ATCC 25905 / DSM 1728 / JCM 9062 / NBRC 15155 / AMRC-C165)).